Reading from the N-terminus, the 193-residue chain is MAEHKPDIMYGTTIITVRKGGKVVMAGDGQVSLGQTIMKGNARKVRRLGKSGAVIAGFAGATADAFTLLERLETKLEQYPDQLMRACVELAKDWRTDRYLRRLEAMMLVADKKITLALTGLGDVLEPEDGIMAIGSGGNFALSAARALIDMDLDAETIARKAMNIAAKICVYTNDHFTIETLDAELSSLEKAI.

Thr-12 is a catalytic residue. Ala-167, Cys-170, and Thr-173 together coordinate Na(+).

The protein belongs to the peptidase T1B family. HslV subfamily. A double ring-shaped homohexamer of HslV is capped on each side by a ring-shaped HslU homohexamer. The assembly of the HslU/HslV complex is dependent on binding of ATP.

It localises to the cytoplasm. It carries out the reaction ATP-dependent cleavage of peptide bonds with broad specificity.. Its activity is regulated as follows. Allosterically activated by HslU binding. Protease subunit of a proteasome-like degradation complex believed to be a general protein degrading machinery. This chain is ATP-dependent protease subunit HslV, found in Bartonella henselae (strain ATCC 49882 / DSM 28221 / CCUG 30454 / Houston 1) (Rochalimaea henselae).